The following is a 110-amino-acid chain: Small ribosomal subunit protein bS16 (110 aa).

A disordered region spans residues 84-110 (KRAPRNNPEKAVPRKERKAAAEAAAKA). The segment covering 90–103 (NPEKAVPRKERKAA) has biased composition (basic and acidic residues).

This sequence belongs to the bacterial ribosomal protein bS16 family.

The sequence is that of Small ribosomal subunit protein bS16 from Afipia carboxidovorans (strain ATCC 49405 / DSM 1227 / KCTC 32145 / OM5) (Oligotropha carboxidovorans).